We begin with the raw amino-acid sequence, 810 residues long: MRISLNWLRELVQVDLEPEVLAEKLTLAGFEVEEIEDRRTWAAGVVVGRVLEREQHPNADRLSVCQVEIGQAEPVTIVCGASNVRADIWVAVATLGSYLPCIDLKLKPTKLRGVRSEGMICSLSELGLTKESEGIHIFPEDAGLQAGQPVGPLLGLDDVVLDLTSTANRADALSLIGIAREVRALTAATLTLPEVELQTYPELPCLAISLQSEACSHYSGTIIEGVTIAPSPEWLQKRLQLAGIRTINNVVDITNYILLEYGQPLHAFDRQKLQAIAGSSDLAIGVRSAQAGETLKTLDDQERTLAEAALVITAGDCPVALAGVMGGADSEVSQETTQLLLEAAWFEPIAVRRSARSQGLRTEASARYERGVNVTELPIATQRAIDLLLQIAGGTVISQTVATTTQTEPEHSITLRLQRINELLGPVQAEDEELKDLGADDIERLLTAIGCHLTLVDDAVWQVRVPPYRYRDLEREIDLIEEVARLYGYDNFGETLPPLGSDEGALSIDESLRRQIRAVCRGVGLTELQHYSLVKPGSDRQVHLANPLLAEYSALRLDLLSGLIDAFQYNWEQGNGPLWGFEIGRIFWREEDGFFEADRMGGILGGDPSRGRWQRGGKEQAIDWYAAKGVLEEIFERFGLTIEFQPDRQDDRFHPGRTASLWLQGDRLGRFGQLHPSLCEGRGLPAEVYAFELDLDVWLDHLDQPERQVPRFQPYSSFPASDRDLAFFVDQSVTVAELERIIRRQGGALLSEVELFDQYCGEHVPENQRSLAFRLTYRASDRTLTEAEVEPVHDQVRQSLVERFRVTLRS.

The region spanning 39–151 is the tRNA-binding domain; sequence RTWAAGVVVG…AGLQAGQPVG (113 aa). In terms of domain architecture, B5 spans 408–494; that stretch reads EPEHSITLRL…RLYGYDNFGE (87 aa). 4 residues coordinate Mg(2+): Asp-472, Asp-478, Glu-481, and Glu-482. Residues 716 to 809 enclose the FDX-ACB domain; it reads SSFPASDRDL…LVERFRVTLR (94 aa).

The protein belongs to the phenylalanyl-tRNA synthetase beta subunit family. Type 1 subfamily. As to quaternary structure, tetramer of two alpha and two beta subunits. Mg(2+) is required as a cofactor.

The protein localises to the cytoplasm. The enzyme catalyses tRNA(Phe) + L-phenylalanine + ATP = L-phenylalanyl-tRNA(Phe) + AMP + diphosphate + H(+). The polypeptide is Phenylalanine--tRNA ligase beta subunit (pheT) (Synechococcus elongatus (strain ATCC 33912 / PCC 7942 / FACHB-805) (Anacystis nidulans R2)).